A 258-amino-acid chain; its full sequence is tRNA (guanine-N(7)-)-methyltransferase (258 aa).

Residues Gly-76, 99-100 (EI), 132-133 (NA), and Leu-152 each bind S-adenosyl-L-methionine. Residue Asp-155 is part of the active site. Residue 230 to 232 (TEE) coordinates S-adenosyl-L-methionine.

This sequence belongs to the class I-like SAM-binding methyltransferase superfamily. TrmB family.

It localises to the nucleus. It carries out the reaction guanosine(46) in tRNA + S-adenosyl-L-methionine = N(7)-methylguanosine(46) in tRNA + S-adenosyl-L-homocysteine. It functions in the pathway tRNA modification; N(7)-methylguanine-tRNA biosynthesis. Functionally, catalyzes the formation of N(7)-methylguanine at position 46 (m7G46) in tRNA. In Brugia malayi (Filarial nematode worm), this protein is tRNA (guanine-N(7)-)-methyltransferase.